The following is a 272-amino-acid chain: NADPH-dependent 7-cyano-7-deazaguanine reductase (272 aa).

80 to 82 (VES) is a substrate binding site. Residue 82-83 (SK) participates in NADPH binding. The active-site Thioimide intermediate is Cys178. Residue Asp185 is the Proton donor of the active site. A substrate-binding site is contributed by 217–218 (AE). 246–247 (RG) contributes to the NADPH binding site.

This sequence belongs to the GTP cyclohydrolase I family. QueF type 2 subfamily. Homodimer.

It localises to the cytoplasm. It catalyses the reaction 7-aminomethyl-7-carbaguanine + 2 NADP(+) = 7-cyano-7-deazaguanine + 2 NADPH + 3 H(+). It participates in tRNA modification; tRNA-queuosine biosynthesis. Catalyzes the NADPH-dependent reduction of 7-cyano-7-deazaguanine (preQ0) to 7-aminomethyl-7-deazaguanine (preQ1). This chain is NADPH-dependent 7-cyano-7-deazaguanine reductase, found in Rickettsia typhi (strain ATCC VR-144 / Wilmington).